Consider the following 110-residue polypeptide: UPF0145 protein BLD_1357 (110 aa).

It belongs to the UPF0145 family.

The protein is UPF0145 protein BLD_1357 of Bifidobacterium longum (strain DJO10A).